The following is a 265-amino-acid chain: uncharacterized protein (265 aa).

A helical transmembrane segment spans residues 1–21 (MAFNNSTIIIIIVIAFAFFLI). N-linked (GlcNAc...) asparagine; by host glycans are attached at residues Asn74 and Asn142.

The protein localises to the host membrane. It is found in the virion. This is an uncharacterized protein from Acanthamoeba polyphaga mimivirus (APMV).